A 1388-amino-acid chain; its full sequence is DNA-directed RNA polymerase subunit beta (1388 aa).

Belongs to the RNA polymerase beta chain family. As to quaternary structure, the RNAP catalytic core consists of 2 alpha, 1 beta, 1 beta' and 1 omega subunit. When a sigma factor is associated with the core the holoenzyme is formed, which can initiate transcription.

It catalyses the reaction RNA(n) + a ribonucleoside 5'-triphosphate = RNA(n+1) + diphosphate. Its function is as follows. DNA-dependent RNA polymerase catalyzes the transcription of DNA into RNA using the four ribonucleoside triphosphates as substrates. The chain is DNA-directed RNA polymerase subunit beta from Xylella fastidiosa (strain Temecula1 / ATCC 700964).